A 491-amino-acid chain; its full sequence is Protein nucleotidyltransferase YdiU (491 aa).

8 residues coordinate ATP: glycine 94, glycine 96, arginine 97, lysine 117, aspartate 129, glycine 130, arginine 180, and arginine 187. Aspartate 256 functions as the Proton acceptor in the catalytic mechanism. Positions 257 and 266 each coordinate Mg(2+). An ATP-binding site is contributed by aspartate 266.

The protein belongs to the SELO family. Mg(2+) is required as a cofactor. It depends on Mn(2+) as a cofactor.

The catalysed reaction is L-seryl-[protein] + ATP = 3-O-(5'-adenylyl)-L-seryl-[protein] + diphosphate. It carries out the reaction L-threonyl-[protein] + ATP = 3-O-(5'-adenylyl)-L-threonyl-[protein] + diphosphate. It catalyses the reaction L-tyrosyl-[protein] + ATP = O-(5'-adenylyl)-L-tyrosyl-[protein] + diphosphate. The enzyme catalyses L-histidyl-[protein] + UTP = N(tele)-(5'-uridylyl)-L-histidyl-[protein] + diphosphate. The catalysed reaction is L-seryl-[protein] + UTP = O-(5'-uridylyl)-L-seryl-[protein] + diphosphate. It carries out the reaction L-tyrosyl-[protein] + UTP = O-(5'-uridylyl)-L-tyrosyl-[protein] + diphosphate. In terms of biological role, nucleotidyltransferase involved in the post-translational modification of proteins. It can catalyze the addition of adenosine monophosphate (AMP) or uridine monophosphate (UMP) to a protein, resulting in modifications known as AMPylation and UMPylation. In Clostridium botulinum (strain ATCC 19397 / Type A), this protein is Protein nucleotidyltransferase YdiU.